The sequence spans 107 residues: UPF0122 protein STH1464 (107 aa).

The protein belongs to the UPF0122 family.

Its function is as follows. Might take part in the signal recognition particle (SRP) pathway. This is inferred from the conservation of its genetic proximity to ftsY/ffh. May be a regulatory protein. In Symbiobacterium thermophilum (strain DSM 24528 / JCM 14929 / IAM 14863 / T), this protein is UPF0122 protein STH1464.